The sequence spans 105 residues: Putative thioredoxin-5 (105 aa).

The 104-residue stretch at 1–104 (MYKEPKNESE…VALENMVKKL (104 aa)) folds into the Thioredoxin domain. Catalysis depends on nucleophile residues cysteine 30 and cysteine 33. Cysteine 30 and cysteine 33 form a disulfide bridge.

This sequence belongs to the thioredoxin family.

Its function is as follows. Participates in various redox reactions through the reversible oxidation of its active center dithiol to a disulfide and catalyzes dithiol-disulfide exchange reactions. The chain is Putative thioredoxin-5 (trxE) from Dictyostelium discoideum (Social amoeba).